We begin with the raw amino-acid sequence, 1004 residues long: Retrovirus-related Pol polyprotein from type-1 retrotransposable element R1 (1004 aa).

Residues Q450–V717 enclose the Reverse transcriptase domain. The interval L853–E1004 is nucleic acid-binding endonuclease.

It carries out the reaction DNA(n) + a 2'-deoxyribonucleoside 5'-triphosphate = DNA(n+1) + diphosphate. In Bradysia coprophila (Dark-winged fungus gnat), this protein is Retrovirus-related Pol polyprotein from type-1 retrotransposable element R1.